Reading from the N-terminus, the 214-residue chain is Ornithine decarboxylase antizyme 1 (214 aa).

This sequence belongs to the ODC antizyme family. Interacts with ODC1 and thereby sterically blocks ODC homodimerization.

Its function is as follows. Ornithine decarboxylase (ODC) antizyme protein that negatively regulates ODC activity and intracellular polyamine biosynthesis and uptake in response to increased intracellular polyamine levels. Binds to ODC monomers, inhibiting the assembly of the functional ODC homodimer, and targets the monomers for ubiquitin-independent proteolytic destruction by the 26S proteasome. The chain is Ornithine decarboxylase antizyme 1 (oaz1a) from Danio rerio (Zebrafish).